A 451-amino-acid chain; its full sequence is Nicotinamide phosphoribosyltransferase (451 aa).

Arg-209 provides a ligand contact to diphosphate. Asp-232 lines the beta-nicotinamide D-ribonucleotide pocket. 2 residues coordinate diphosphate: His-248 and Arg-309. Beta-nicotinamide D-ribonucleotide-binding positions include 309–311 (RPD), 364–365 (GD), and Arg-403.

Belongs to the NAPRTase family.

The enzyme catalyses beta-nicotinamide D-ribonucleotide + diphosphate = 5-phospho-alpha-D-ribose 1-diphosphate + nicotinamide + H(+). It functions in the pathway cofactor biosynthesis; NAD(+) biosynthesis; nicotinamide D-ribonucleotide from 5-phospho-alpha-D-ribose 1-diphosphate and nicotinamide: step 1/1. Its function is as follows. Catalyzes the condensation of nicotinamide with 5-phosphoribosyl-1-pyrophosphate to yield nicotinamide mononucleotide, an intermediate in the biosynthesis of NAD. The polypeptide is Nicotinamide phosphoribosyltransferase (Mycoplasma pneumoniae (strain ATCC 29342 / M129 / Subtype 1) (Mycoplasmoides pneumoniae)).